A 922-amino-acid polypeptide reads, in one-letter code: Isoleucine--tRNA ligase (922 aa).

The short motif at 57–67 (PYANGDIHMGH) is the 'HIGH' region element. E553 serves as a coordination point for L-isoleucyl-5'-AMP. Residues 594–598 (KMSKS) carry the 'KMSKS' region motif. An ATP-binding site is contributed by K597. 4 residues coordinate Zn(2+): C889, C892, C909, and C912.

The protein belongs to the class-I aminoacyl-tRNA synthetase family. IleS type 1 subfamily. As to quaternary structure, monomer. Zn(2+) is required as a cofactor.

It is found in the cytoplasm. It carries out the reaction tRNA(Ile) + L-isoleucine + ATP = L-isoleucyl-tRNA(Ile) + AMP + diphosphate. In terms of biological role, catalyzes the attachment of isoleucine to tRNA(Ile). As IleRS can inadvertently accommodate and process structurally similar amino acids such as valine, to avoid such errors it has two additional distinct tRNA(Ile)-dependent editing activities. One activity is designated as 'pretransfer' editing and involves the hydrolysis of activated Val-AMP. The other activity is designated 'posttransfer' editing and involves deacylation of mischarged Val-tRNA(Ile). The sequence is that of Isoleucine--tRNA ligase from Bacillus licheniformis (strain ATCC 14580 / DSM 13 / JCM 2505 / CCUG 7422 / NBRC 12200 / NCIMB 9375 / NCTC 10341 / NRRL NRS-1264 / Gibson 46).